Reading from the N-terminus, the 89-residue chain is Small cysteine-rich protein 1 (89 aa).

The signal sequence occupies residues 1–20 (MDVRFRLCLFLVILVIVANA). A propeptide spanning residues 21–27 (NVIKEPE) is cleaved from the precursor.

This sequence belongs to the Cnidaria small cysteine-rich protein (SCRiP) family. gamma subfamily. In terms of processing, contains 4 disulfide bonds.

Its subcellular location is the secreted. It localises to the nematocyst. Induces neurotoxic symptoms on zebrafish. Has also been claimed to be implied in calcification, but tests on homolog proteins suggest that proteins of this family have a neurotoxic function and not a calcification function. The polypeptide is Small cysteine-rich protein 1 (Acropora millepora (Staghorn coral)).